The following is a 571-amino-acid chain: Membrane protein insertase YidC (571 aa).

A helical membrane pass occupies residues 4–24 (TRVFLIFAWLMVAVLLWMEWS). The interval 29-78 (APTPAPTTTSAPAAAQSVPGANPGAIPSAQVPGAPGQAAAQAQASATPAS) is disordered. Composition is skewed to low complexity over residues 34 to 43 (PTTTSAPAAA) and 55 to 78 (PSAQVPGAPGQAAAQAQASATPAS). The next 4 helical transmembrane spans lie at 369–389 (LVGNWGWAIVGLVVLLKLVLY), 440–460 (GGCLPILIQMPIFFALYWVLV), 483–503 (YFILPVINVAVMWFTQKLTPA), and 518–538 (PLVFGVMMAFMPSGLVLYWVV).

The protein belongs to the OXA1/ALB3/YidC family. Type 1 subfamily. Interacts with the Sec translocase complex via SecD. Specifically interacts with transmembrane segments of nascent integral membrane proteins during membrane integration.

The protein resides in the cell inner membrane. Required for the insertion and/or proper folding and/or complex formation of integral membrane proteins into the membrane. Involved in integration of membrane proteins that insert both dependently and independently of the Sec translocase complex, as well as at least some lipoproteins. Aids folding of multispanning membrane proteins. In Stenotrophomonas maltophilia (strain K279a), this protein is Membrane protein insertase YidC.